Here is a 726-residue protein sequence, read N- to C-terminus: Dipeptidyl-peptidase 5 (726 aa).

The N-terminal stretch at 1 to 19 (MAAAKWLIASLAFASSGLA) is a signal peptide. N-linked (GlcNAc...) asparagine glycosylation is found at Asn-96 and Asn-252. A disordered region spans residues 269–291 (AEPINKRNGPRTPQGIEGASSSP). The active-site Charge relay system is Ser-558. Asn-605 and Asn-638 each carry an N-linked (GlcNAc...) asparagine glycan. Active-site charge relay system residues include Asp-641 and His-673. N-linked (GlcNAc...) asparagine glycosylation is present at Asn-699.

Belongs to the peptidase S9C family.

The protein localises to the secreted. This is Dipeptidyl-peptidase 5 (DPPV) from Trichophyton schoenleinii.